The chain runs to 118 residues: MKAISPVRSMSSCYQAVCCLSEQSLSIARGSSHKGPGMDEPMGLLYDMNGCYSKLKELVPGIPQGSKLSQVEILQHVIDYIFDLQIVLGEDQQQSSILSLQKSDFSELATQGDTSVCH.

Residues 32 to 84 (SHKGPGMDEPMGLLYDMNGCYSKLKELVPGIPQGSKLSQVEILQHVIDYIFDL) enclose the bHLH domain.

As to quaternary structure, homodimer. Heterodimer with other HLH proteins. Interacts (via HLH domain) with the bHLH protein hes4/hairy2 (via Orange domain). Interacts with stat3. At gastrula stage, expressed in all three germ layers, but becomes localized to discrete domains of the developing nervous system during neurulation, including the anterior neural plate, cement gland, eye anlagen, otic placode and both cranial and trunk premigratory and early migratory neural crest cells. Also expressed in the most dorsal and ventral portions of the myotome, the developing heart and anterior blood islets, and in the tail fin mesenchyme. Expressed at a low level in limbs, with expression decreasing as limbs develop, but expressed at a high level in blastemas (regenerated limbs), where expression is localized to both the blastermal epidermis and mesenchyme. Widely expressed in adults including the liver and heart.

It localises to the nucleus. Transcriptional regulator (lacking a basic DNA binding domain) which negatively regulates the basic helix-loop-helix (bHLH) transcription factors by forming heterodimers and inhibiting their DNA binding and transcriptional activity. Influences cell fate decisions in the embryo by sequestering and blocking the activity of the bHLH transcription factors that control these decisions. Inhibits the binding of myogenic bHLH-containing complexes to E-box DNA, thereby preventing activation of muscle-specific target genes. Also inhibits the activity of neurogenic factor neurod1/neuroD. Plays a role in cell cycle progression and survival of neural crest progenitors; binding to either hes4-B/hairy2b or stat3 blocks the formation of transcription factor complexes and the repressor function of hes4-B/hairy2B, to allow neural crest progenitors to differentiate. May play a role in the regulation of the circadian rhythm. This Xenopus laevis (African clawed frog) protein is DNA-binding protein inhibitor ID-3-A (id3-a).